A 108-amino-acid chain; its full sequence is Small ribosomal subunit protein mS33 (108 aa).

The disordered stretch occupies residues 84–108 (LRARDKGAPKKKRTAPSAADAKKKK).

It belongs to the mitochondrion-specific ribosomal protein mS33 family. In terms of assembly, component of the mitochondrial small ribosomal subunit (mt-SSU). Mature N.crassa 74S mitochondrial ribosomes consist of a small (37S) and a large (54S) subunit. The 37S small subunit contains a 16S ribosomal RNA (16S mt-rRNA) and 32 different proteins. The 54S large subunit contains a 23S rRNA (23S mt-rRNA) and 42 different proteins.

It localises to the mitochondrion. Functionally, component of the mitochondrial ribosome (mitoribosome), a dedicated translation machinery responsible for the synthesis of mitochondrial genome-encoded proteins, including at least some of the essential transmembrane subunits of the mitochondrial respiratory chain. The mitoribosomes are attached to the mitochondrial inner membrane and translation products are cotranslationally integrated into the membrane. This is Small ribosomal subunit protein mS33 (rsm27) from Neurospora crassa (strain ATCC 24698 / 74-OR23-1A / CBS 708.71 / DSM 1257 / FGSC 987).